Reading from the N-terminus, the 353-residue chain is UPF0283 membrane protein YcjF (353 aa).

3 consecutive transmembrane segments (helical) span residues 70–90 (MVMGGLALFGASVVGQGIQWT), 100–120 (VALGGCAAGALIIGAGVGSVV), and 213–233 (ESTLMIAVSPLALVDMAFIAW).

Belongs to the UPF0283 family.

It is found in the cell inner membrane. This is UPF0283 membrane protein YcjF from Shigella flexneri serotype 5b (strain 8401).